Here is a 200-residue protein sequence, read N- to C-terminus: MARYRGPKQKIARRFKEPIFGPSKALERKPYPPGQHGQSRRRRESEYAVQLKEKQKTKYTYGLLERQFKNLFDKASRMQGVTGEKLLILLEARLDNTVFRMGIARTRRQARQFVAHRHIMVNDEVVDIPSYEMSPDDVVSVKPSSQDLEVIQTNVEHRQRTFSWLEMDRQEMKGKFIDYPNREEIPENIDEQLIVELYSK.

A compositionally biased stretch (basic residues) spans 1-13; it reads MARYRGPKQKIAR. The segment at 1–44 is disordered; it reads MARYRGPKQKIARRFKEPIFGPSKALERKPYPPGQHGQSRRRRE. The 63-residue stretch at 92 to 154 folds into the S4 RNA-binding domain; it reads ARLDNTVFRM…SQDLEVIQTN (63 aa).

Belongs to the universal ribosomal protein uS4 family. In terms of assembly, part of the 30S ribosomal subunit. Contacts protein S5. The interaction surface between S4 and S5 is involved in control of translational fidelity.

One of the primary rRNA binding proteins, it binds directly to 16S rRNA where it nucleates assembly of the body of the 30S subunit. Its function is as follows. With S5 and S12 plays an important role in translational accuracy. This Salinibacter ruber (strain DSM 13855 / M31) protein is Small ribosomal subunit protein uS4.